Here is a 428-residue protein sequence, read N- to C-terminus: Serine--tRNA ligase (428 aa).

231-233 (TAE) serves as a coordination point for L-serine. ATP is bound at residue 262-264 (RSE). L-serine is bound at residue Glu-285. An ATP-binding site is contributed by 349 to 352 (EISS). An L-serine-binding site is contributed by Ser-385.

The protein belongs to the class-II aminoacyl-tRNA synthetase family. Type-1 seryl-tRNA synthetase subfamily. As to quaternary structure, homodimer. The tRNA molecule binds across the dimer.

The protein localises to the cytoplasm. The catalysed reaction is tRNA(Ser) + L-serine + ATP = L-seryl-tRNA(Ser) + AMP + diphosphate + H(+). It catalyses the reaction tRNA(Sec) + L-serine + ATP = L-seryl-tRNA(Sec) + AMP + diphosphate + H(+). The protein operates within aminoacyl-tRNA biosynthesis; selenocysteinyl-tRNA(Sec) biosynthesis; L-seryl-tRNA(Sec) from L-serine and tRNA(Sec): step 1/1. Functionally, catalyzes the attachment of serine to tRNA(Ser). Is also able to aminoacylate tRNA(Sec) with serine, to form the misacylated tRNA L-seryl-tRNA(Sec), which will be further converted into selenocysteinyl-tRNA(Sec). The polypeptide is Serine--tRNA ligase (Staphylococcus aureus (strain MW2)).